The following is a 192-amino-acid chain: Inosine triphosphate pyrophosphatase (192 aa).

Residue 10 to 15 (TGNANK) coordinates ITP. Glu43 is a Mg(2+) binding site. Residues Lys56, 74-75 (DT), Lys91, 149-152 (FGWD), Lys173, and 178-179 (HR) contribute to the ITP site.

Belongs to the HAM1 NTPase family. In terms of assembly, homodimer. The cofactor is Mg(2+). Mn(2+) is required as a cofactor.

It is found in the cytoplasm. Its subcellular location is the nucleus. The enzyme catalyses ITP + H2O = IMP + diphosphate + H(+). It carries out the reaction dITP + H2O = dIMP + diphosphate + H(+). It catalyses the reaction XTP + H2O = XMP + diphosphate + H(+). Pyrophosphatase that hydrolyzes non-canonical purine nucleotides such as inosine triphosphate (ITP), deoxyinosine triphosphate (dITP) or xanthosine 5'-triphosphate (XTP) to their respective monophosphate derivatives. The enzyme does not distinguish between the deoxy- and ribose forms. Probably excludes non-canonical purines from RNA and DNA precursor pools, thus preventing their incorporation into RNA and DNA and avoiding chromosomal lesions. This Candida glabrata (strain ATCC 2001 / BCRC 20586 / JCM 3761 / NBRC 0622 / NRRL Y-65 / CBS 138) (Yeast) protein is Inosine triphosphate pyrophosphatase.